Here is a 403-residue protein sequence, read N- to C-terminus: MSKESRTLQAIKFDRQNVTLDILDQLVLPYSTTYISIKSIDDAYNAIKSMQVRGAPAIAIVGAFAIVVDIYNNLKSKDGNSSIGDLQTSLQHLLRSRPTAVNLANAINDIEQILCSYETSEVLNESIYKQIFDYATRLYDDDLANNHKIGENGLKYIVESLKQENFKGPFSIITICNTGSLATSGHGTALGIIRSTYAKLHKEVSGEDFFLDHVYPCETRPYNQGAKLTTYELDYEKIPFTLICDNMVSSLIQTLKNEKKDVHGKTSPVKFIIVGADRIVRNGDAANKIGTFQLATIAQYFNSAQDTKIKFIVAAPRTTIDLNTETGDEIKIEERPHKELTTLVGPVLNGLEVGDKITVGIATPGITVWNPAFDVTPHGLIDSIITEDPIAYVKDKNGNYNLT.

The active-site Proton donor is the Asp277.

The protein belongs to the eIF-2B alpha/beta/delta subunits family. MtnA subfamily.

The protein localises to the cytoplasm. Its subcellular location is the nucleus. The catalysed reaction is 5-(methylsulfanyl)-alpha-D-ribose 1-phosphate = 5-(methylsulfanyl)-D-ribulose 1-phosphate. It functions in the pathway amino-acid biosynthesis; L-methionine biosynthesis via salvage pathway; L-methionine from S-methyl-5-thio-alpha-D-ribose 1-phosphate: step 1/6. Catalyzes the interconversion of methylthioribose-1-phosphate (MTR-1-P) into methylthioribulose-1-phosphate (MTRu-1-P). This Lodderomyces elongisporus (strain ATCC 11503 / CBS 2605 / JCM 1781 / NBRC 1676 / NRRL YB-4239) (Yeast) protein is Methylthioribose-1-phosphate isomerase.